A 158-amino-acid chain; its full sequence is Endoribonuclease YbeY (158 aa).

Zn(2+) contacts are provided by His-118, His-122, and His-128.

It belongs to the endoribonuclease YbeY family. Zn(2+) is required as a cofactor.

The protein resides in the cytoplasm. In terms of biological role, single strand-specific metallo-endoribonuclease involved in late-stage 70S ribosome quality control and in maturation of the 3' terminus of the 16S rRNA. The chain is Endoribonuclease YbeY from Alteromonas mediterranea (strain DSM 17117 / CIP 110805 / LMG 28347 / Deep ecotype).